An 81-amino-acid chain; its full sequence is Toxin-like peptide AaF1CA5 (81 aa).

The first 22 residues, 1 to 22, serve as a signal peptide directing secretion; that stretch reads MMKLMLFSIIVILFSLIGSIHG. An LCN-type CS-alpha/beta domain is found at 25-81; that stretch reads VPGNYPLDSSDDTYLCAPLGENPFCIKICRKHGVKYGLMLRLPCWCEYFGKIKNVKI. Disulfide bonds link cysteine 49–cysteine 68 and cysteine 53–cysteine 70.

Belongs to the long (3 C-C) scorpion toxin superfamily. As to expression, expressed by the venom gland.

Its subcellular location is the secreted. Functionally, probable neurotoxin that inhibits ion channels. This Androctonus australis (Sahara scorpion) protein is Toxin-like peptide AaF1CA5.